The chain runs to 194 residues: Inosine triphosphate pyrophosphatase (194 aa).

A2 is subject to N-acetylalanine. T14–K19 is an ITP binding site. E44 contacts Mg(2+). ITP-binding positions include K56, D72 to T73, K89, F149 to D152, K172, and H177 to R178.

The protein belongs to the HAM1 NTPase family. As to quaternary structure, homodimer. The cofactor is Mg(2+). As to expression, ubiquitous. Highly expressed in heart, liver, sex glands, thyroid and adrenal gland.

Its subcellular location is the cytoplasm. It carries out the reaction ITP + H2O = IMP + diphosphate + H(+). The enzyme catalyses dITP + H2O = dIMP + diphosphate + H(+). It catalyses the reaction XTP + H2O = XMP + diphosphate + H(+). The catalysed reaction is N(6)-hydroxy-dATP + H2O = N(6)-hydroxy-dAMP + diphosphate + H(+). Pyrophosphatase that hydrolyzes the non-canonical purine nucleotides inosine triphosphate (ITP), deoxyinosine triphosphate (dITP) as well as 2'-deoxy-N-6-hydroxylaminopurine triphosphate (dHAPTP) and xanthosine 5'-triphosphate (XTP) to their respective monophosphate derivatives. The enzyme does not distinguish between the deoxy- and ribose forms. Probably excludes non-canonical purines from RNA and DNA precursor pools, thus preventing their incorporation into RNA and DNA and avoiding chromosomal lesions. The sequence is that of Inosine triphosphate pyrophosphatase from Homo sapiens (Human).